The following is a 164-amino-acid chain: S-ribosylhomocysteine lyase (164 aa).

Fe cation is bound by residues His-61, His-65, and Cys-131.

The protein belongs to the LuxS family. In terms of assembly, homodimer. Fe cation serves as cofactor.

The enzyme catalyses S-(5-deoxy-D-ribos-5-yl)-L-homocysteine = (S)-4,5-dihydroxypentane-2,3-dione + L-homocysteine. Functionally, involved in the synthesis of autoinducer 2 (AI-2) which is secreted by bacteria and is used to communicate both the cell density and the metabolic potential of the environment. The regulation of gene expression in response to changes in cell density is called quorum sensing. Catalyzes the transformation of S-ribosylhomocysteine (RHC) to homocysteine (HC) and 4,5-dihydroxy-2,3-pentadione (DPD). The polypeptide is S-ribosylhomocysteine lyase (Bifidobacterium longum subsp. infantis (strain ATCC 15697 / DSM 20088 / JCM 1222 / NCTC 11817 / S12)).